The following is a 428-amino-acid chain: Mitochondrial distribution and morphology protein 12 (428 aa).

One can recognise an SMP-LTD domain in the interval Met-1–Asn-387. 2 disordered regions span residues Val-75 to Leu-168 and Asn-387 to Glu-428. Residues Asn-81–Asn-96 show a composition bias toward basic and acidic residues. A compositionally biased stretch (acidic residues) spans Leu-106–Asp-133. Over residues Leu-146–Ala-161 the composition is skewed to polar residues. The span at Asn-387–Asp-403 shows a compositional bias: acidic residues. Residues Asn-412–Glu-428 are compositionally biased toward basic and acidic residues.

The protein belongs to the MDM12 family. Component of the ER-mitochondria encounter structure (ERMES) or MDM complex, composed of MMM1, MDM10, MDM12 and MDM34. An MMM1 homodimer associates with one molecule of MDM12 on each side in a pairwise head-to-tail manner, and the SMP-LTD domains of MMM1 and MDM12 generate a continuous hydrophobic tunnel for phospholipid trafficking.

It is found in the mitochondrion outer membrane. The protein resides in the endoplasmic reticulum membrane. In terms of biological role, component of the ERMES/MDM complex, which serves as a molecular tether to connect the endoplasmic reticulum (ER) and mitochondria. Components of this complex are involved in the control of mitochondrial shape and protein biogenesis, and function in nonvesicular lipid trafficking between the ER and mitochondria. MDM12 is required for the interaction of the ER-resident membrane protein MMM1 and the outer mitochondrial membrane-resident beta-barrel protein MDM10. The MDM12-MMM1 subcomplex functions in the major beta-barrel assembly pathway that is responsible for biogenesis of all mitochondrial outer membrane beta-barrel proteins, and acts in a late step after the SAM complex. The MDM10-MDM12-MMM1 subcomplex further acts in the TOM40-specific pathway after the action of the MDM12-MMM1 complex. Essential for establishing and maintaining the structure of mitochondria and maintenance of mtDNA nucleoids. This chain is Mitochondrial distribution and morphology protein 12, found in Candida albicans (strain SC5314 / ATCC MYA-2876) (Yeast).